The sequence spans 128 residues: Prokineticin-2 (128 aa).

The signal sequence occupies residues 1–26; sequence MGDPRCAPLLLLLLLPLLFTPPAGDA. Cystine bridges form between C33–C45, C39–C57, C44–C106, C67–C114, and C108–C124.

This sequence belongs to the AVIT (prokineticin) family. In terms of tissue distribution, expressed in the SCN and among a few other discrete brain areas, including the islands of Calleja, media l preoptic area of the hypothalamus and the shell of the nucleus accumbens. Highly expressed in testis. In the SCN, expression subjected to high amplitude of circadian oscillation.

It is found in the secreted. May function as an output molecule from the suprachiasmatic nucleus (SCN) that transmits behavioral circadian rhythm. May also function locally within the SCN to synchronize output. Potently contracts gastrointestinal (GI) smooth muscle. This chain is Prokineticin-2 (Prok2), found in Mus musculus (Mouse).